The primary structure comprises 132 residues: ATP synthase epsilon chain, chloroplastic (132 aa).

Thr-2 bears the N-acetylthreonine mark.

The protein belongs to the ATPase epsilon chain family. F-type ATPases have 2 components, CF(1) - the catalytic core - and CF(0) - the membrane proton channel. CF(1) has five subunits: alpha(3), beta(3), gamma(1), delta(1), epsilon(1). CF(0) has three main subunits: a, b and c.

It localises to the plastid. Its subcellular location is the chloroplast thylakoid membrane. Its function is as follows. Produces ATP from ADP in the presence of a proton gradient across the membrane. The sequence is that of ATP synthase epsilon chain, chloroplastic from Arabidopsis thaliana (Mouse-ear cress).